The chain runs to 1302 residues: Serine-enriched protein (1302 aa).

The 119-residue stretch at 40–158 (CDVTFLVGDT…IHTGCVTLQP (119 aa)) folds into the BTB domain. Disordered stretches follow at residues 325–532 (SIDP…RSPT), 575–624 (PIPP…SVMR), 648–685 (FTRAESGSSGGPLIRQSTFSASPAASSTAAKSAVQKQM), 701–752 (YAKM…SSDE), 834–858 (FTRRSESREPIEPRISEERESDSND), 1045–1090 (FQRS…RTEN), 1102–1163 (FSRA…GEEE), and 1187–1252 (VLTQ…SASP). The span at 337-364 (RQHHRHRHHHQSLPKIRKAKSQSFRTRR) shows a compositional bias: basic residues. Composition is skewed to polar residues over residues 378–388 (LTLNTSLTSGN), 410–430 (SPGSSSQKTPTSLSRQGTLRA), 437–449 (SGQLSISLGTQGR), and 472–487 (GLRSPNDPMTSPTVRS). The span at 589-623 (KSAEREREAAEAAAREKEKEKEKEAAQPQEKKSVM) shows a compositional bias: basic and acidic residues. Low complexity predominate over residues 664-680 (STFSASPAASSTAAKSA). The span at 713–723 (KRDDEEKEKQK) shows a compositional bias: basic and acidic residues. The segment covering 736-748 (DLSQTNADQQVGG) has biased composition (polar residues). The segment covering 836-855 (RRSESREPIEPRISEERESD) has biased composition (basic and acidic residues). Low complexity-rich tracts occupy residues 1047–1056 (RSGSSCGGRK) and 1107–1128 (SPLSQQTSSNYSSRDSYDSSGS). The segment covering 1187-1207 (VLTQQLSTGSMSTPSGYTNGT) has biased composition (polar residues). Residues 1226–1252 (APLSSCGFSSGSEFEPPSPRRAASASP) are compositionally biased toward low complexity.

The chain is Serine-enriched protein (gprs) from Drosophila melanogaster (Fruit fly).